The chain runs to 183 residues: Dual-action ribosomal maturation protein DarP (183 aa).

The protein belongs to the DarP family.

It localises to the cytoplasm. Its function is as follows. Member of a network of 50S ribosomal subunit biogenesis factors which assembles along the 30S-50S interface, preventing incorrect 23S rRNA structures from forming. Promotes peptidyl transferase center (PTC) maturation. The sequence is that of Dual-action ribosomal maturation protein DarP from Salmonella gallinarum (strain 287/91 / NCTC 13346).